The sequence spans 559 residues: ATP-dependent RNA helicase HAS1 (559 aa).

The tract at residues 1-90 (MAPRSQSKSQ…TSEAEADEPG (90 aa)) is disordered. 2 stretches are compositionally biased toward basic and acidic residues: residues 9–22 (SQRE…REDA) and 55–75 (PDQK…ELTK). Positions 93 to 121 (YSFEKADFSEPTMKAIKEMGFQKMTKVQA) match the Q motif motif. Positions 124 to 300 (IPPLLAGRDV…RISLRPGPLY (177 aa)) constitute a Helicase ATP-binding domain. 137-144 (AKTGSGKT) provides a ligand contact to ATP. The DEAD box motif lies at 247–250 (DEAD). A Helicase C-terminal domain is found at 314 to 484 (GLEQGYVVCD…NVQSQLTKLI (171 aa)).

It belongs to the DEAD box helicase family. DDX18/HAS1 subfamily. As to quaternary structure, associates in the nucleolus with the 60S and pre-60S ribosomal subunits.

The protein resides in the nucleus. It localises to the nucleolus. It carries out the reaction ATP + H2O = ADP + phosphate + H(+). Its function is as follows. ATP-dependent RNA helicase involved in 40S ribosomal subunit biogenesis. Required for the processing and cleavage of 35S pre-rRNA at sites A0, A1, and A2, leading to mature 18S rRNA. The polypeptide is ATP-dependent RNA helicase HAS1 (HAS1) (Lodderomyces elongisporus (strain ATCC 11503 / CBS 2605 / JCM 1781 / NBRC 1676 / NRRL YB-4239) (Yeast)).